The primary structure comprises 101 residues: Integration host factor subunit alpha (101 aa).

It belongs to the bacterial histone-like protein family. As to quaternary structure, heterodimer of an alpha and a beta chain.

In terms of biological role, this protein is one of the two subunits of integration host factor, a specific DNA-binding protein that functions in genetic recombination as well as in transcriptional and translational control. The protein is Integration host factor subunit alpha of Saccharophagus degradans (strain 2-40 / ATCC 43961 / DSM 17024).